We begin with the raw amino-acid sequence, 396 residues long: Phosphoglycerate kinase (396 aa).

Substrate contacts are provided by residues 21-23 (DFN), Arg-36, 59-62 (HLGK), Arg-119, and Arg-156. Residues Lys-206, Gly-294, Glu-325, and 352–355 (GGDS) each bind ATP.

It belongs to the phosphoglycerate kinase family. Monomer.

The protein resides in the cytoplasm. It catalyses the reaction (2R)-3-phosphoglycerate + ATP = (2R)-3-phospho-glyceroyl phosphate + ADP. The protein operates within carbohydrate degradation; glycolysis; pyruvate from D-glyceraldehyde 3-phosphate: step 2/5. The chain is Phosphoglycerate kinase from Listeria monocytogenes serovar 1/2a (strain ATCC BAA-679 / EGD-e).